The following is a 277-amino-acid chain: Shikimate dehydrogenase (NADP(+)) (277 aa).

Shikimate-binding positions include 15 to 17 (SLS) and Thr-62. Lys-66 (proton acceptor) is an active-site residue. The shikimate site is built by Asn-87 and Asp-102. NADP(+)-binding positions include 127-131 (GAGGA), 151-156 (NRTVDK), and Ile-219. Residue Tyr-221 coordinates shikimate. Residue Gly-242 coordinates NADP(+).

Belongs to the shikimate dehydrogenase family. As to quaternary structure, homodimer.

It carries out the reaction shikimate + NADP(+) = 3-dehydroshikimate + NADPH + H(+). The protein operates within metabolic intermediate biosynthesis; chorismate biosynthesis; chorismate from D-erythrose 4-phosphate and phosphoenolpyruvate: step 4/7. Involved in the biosynthesis of the chorismate, which leads to the biosynthesis of aromatic amino acids. Catalyzes the reversible NADPH linked reduction of 3-dehydroshikimate (DHSA) to yield shikimate (SA). The polypeptide is Shikimate dehydrogenase (NADP(+)) (Bacillus anthracis (strain CDC 684 / NRRL 3495)).